Here is a 424-residue protein sequence, read N- to C-terminus: Glutamate-1-semialdehyde 2,1-aminomutase (424 aa).

An N6-(pyridoxal phosphate)lysine modification is found at lysine 268.

This sequence belongs to the class-III pyridoxal-phosphate-dependent aminotransferase family. HemL subfamily. The cofactor is pyridoxal 5'-phosphate.

Its subcellular location is the cytoplasm. It carries out the reaction (S)-4-amino-5-oxopentanoate = 5-aminolevulinate. It participates in porphyrin-containing compound metabolism; protoporphyrin-IX biosynthesis; 5-aminolevulinate from L-glutamyl-tRNA(Glu): step 2/2. The polypeptide is Glutamate-1-semialdehyde 2,1-aminomutase (Methanosarcina acetivorans (strain ATCC 35395 / DSM 2834 / JCM 12185 / C2A)).